The chain runs to 198 residues: DnaJ homolog subfamily C member 12 (198 aa).

Met-1 bears the N-acetylmethionine mark. Positions 14 to 79 (DYYALLGCDE…ESRARYDHWR (66 aa)) constitute a J domain. Positions 114 to 177 (EGSGQTFTSS…GLSDLNCGHL (64 aa)) are disordered. A compositionally biased stretch (polar residues) spans 116–125 (SGQTFTSSVP). Positions 126–156 (NKERSEQRETKKGDPDSNPEKMKQKEPKFPE) are enriched in basic and acidic residues. Phosphoserine is present on residues Ser-160, Ser-166, and Ser-182.

As to quaternary structure, interacts with HSPA8. Interacts with TPH1. Interacts with TPH2. As to expression, highest levels of expression are detected in kidney, pineal gland, and raphe nuclei in the brain where it localizes to serotonerigic neurons.

The protein localises to the cytoplasm. In terms of biological role, probable co-chaperone that participates in the proper folding of biopterin-dependent aromatic amino acid hydroxylases, which include phenylalanine-4-hydroxylase (PAH), tyrosine 3-monooxygenase (TH) and peripheral and neuronal tryptophan hydroxylases (TPH1 and TPH2). This Mus musculus (Mouse) protein is DnaJ homolog subfamily C member 12 (Dnajc12).